A 313-amino-acid chain; its full sequence is MSSREIRIATRKSALALWQAEYVKARLEQAHPGLLVTLVPMVSRGDKLLDSPLSKIGGKGLFVKELETALLEDNADIAVHSMKDVPMDFPQGLGLFCICEREDPRDAFVSNTFESLDALPAGSIVGTSSLRRQAQLLARRPDLQIRFLRGNVNTRLAKLDAGEYNAIILAAAGLIRLGFEDRITSAISVDDSLPAGGQGAVGIECRSVDAEIHALLAPLHHEDTAVRVIAERSLNKHLNGGCQVPIACYAVLEGDDVWLRGLVGDPSGRVLLHADARAPQTSAQALGVQVAEALLAQGAAEILKAVYGEANNE.

Cys-242 is subject to S-(dipyrrolylmethanemethyl)cysteine.

Belongs to the HMBS family. Monomer. Dipyrromethane is required as a cofactor.

It catalyses the reaction 4 porphobilinogen + H2O = hydroxymethylbilane + 4 NH4(+). The protein operates within porphyrin-containing compound metabolism; protoporphyrin-IX biosynthesis; coproporphyrinogen-III from 5-aminolevulinate: step 2/4. Tetrapolymerization of the monopyrrole PBG into the hydroxymethylbilane pre-uroporphyrinogen in several discrete steps. This is Porphobilinogen deaminase from Pseudomonas syringae pv. tomato (strain ATCC BAA-871 / DC3000).